Here is a 2766-residue protein sequence, read N- to C-terminus: PDZ domain-containing protein 2 (2766 aa).

A PDZ 1 domain is found at 85–177; it reads LSFGNIPVFG…GGFIYLIMLR (93 aa). Disordered stretches follow at residues 189-315 and 419-452; these read GNSG…KTGK and MPGS…KLKS. Residues 242-254 show a composition bias toward acidic residues; it reads TADDPNSELENGA. The span at 280–296 shows a compositional bias: basic and acidic residues; the sequence is HLERSEADSEVELRVPK. One can recognise a PDZ 2 domain in the interval 334 to 419; the sequence is KMELLKESDG…MVQLVVASKM (86 aa). Position 517 is a phosphoserine (S517). The PDZ 3 domain maps to 535 to 621; sequence IIGLYKEKGK…GLFVLTVRTK (87 aa). Residues 627 to 636 show a composition bias toward polar residues; the sequence is LTPCSTPTHM. The disordered stretch occupies residues 627–673; the sequence is LTPCSTPTHMSRSSSPSFNTNSGGTPAGGGQEEGGSSSLGRKAPGPK. Residues 637–650 are compositionally biased toward low complexity; the sequence is SRSSSPSFNTNSGG. In terms of domain architecture, PDZ 4 spans 679–764; sequence EVTLNKEPRV…GPVRLVIGRH (86 aa). The span at 783-794 shows a compositional bias: polar residues; that stretch reads YQESREANSSPG. Disordered regions lie at residues 783–803 and 834–853; these read YQES…KSPS and AGSE…EDGS. Residues S891 and S895 each carry the phosphoserine modification. Disordered regions lie at residues 915–966, 990–1425, 1456–1531, 1725–1909, 1924–1967, 2015–2070, 2146–2174, 2262–2397, 2424–2450, and 2465–2496; these read NGGS…KQEE, HSIL…PSVL, ISLS…CPGT, DSQG…LPEQ, DTSC…IRQS, ERVP…ASQV, FSSH…AMGG, DRPT…ERRT, QLEI…GHAD, and TRAY…WATP. Positions 918 to 927 are enriched in acidic residues; that stretch reads SDDEDFDGEG. Residues 1021-1038 are compositionally biased toward basic and acidic residues; sequence GRKEMSGSRSSPKLEYRV. 3 stretches are compositionally biased toward polar residues: residues 1040–1061, 1126–1137, and 1189–1220; these read TDTQ…SENL, PGDSSVPTNCGP, and SETP…SQGI. Low complexity-rich tracts occupy residues 1379–1393 and 1456–1471; these read SQPP…SHHA and ISLS…SPSS. Position 1767 is a phosphoserine (S1767). Residues 1797–1806 are compositionally biased toward basic residues; the sequence is CSPKLKRLNS. Over residues 1884–1901 the composition is skewed to polar residues; sequence LRTSASDTSIRTFTSPLT. Low complexity-rich tracts occupy residues 1924 to 1937 and 1947 to 1963; these read DTSC…PRSG and SGSA…ALAG. Composition is skewed to low complexity over residues 2280 to 2296 and 2305 to 2321; these read PPIN…GSPS and RSLS…SSLL. Polar residues-rich tracts occupy residues 2322–2347 and 2362–2372; these read PQMT…SNKG and PTSTVSPASPS. A PDZ 5 domain is found at 2550–2634; that stretch reads FIVLNKKEGS…HKHALMIIKK (85 aa). The tract at residues 2635–2667 is disordered; it reads GNDQPGPSFKQEPPSANGKGPFPRRTLPLEPGA. Residues 2678-2763 enclose the PDZ 6 domain; sequence CVEVLKTSAG…GPVQLVIRKH (86 aa).

In terms of assembly, interacts with SCN10A, CTNND2 and PKP4. Post-translationally, a secreted form is produced by caspase-mediated proteolytic cleavage. As to expression, expressed in the heart, liver, brain, spleen, lung, kidney, testis and skeletal muscle.

It is found in the nucleus. The protein resides in the cytoplasm. Its subcellular location is the endoplasmic reticulum. The protein localises to the cell junction. It localises to the secreted. The sequence is that of PDZ domain-containing protein 2 (Pdzd2) from Rattus norvegicus (Rat).